A 1679-amino-acid polypeptide reads, in one-letter code: Furin-like protease 2 (1679 aa).

A compositionally biased stretch (polar residues) spans 1 to 10; that stretch reads MSNTTRSSRV. The interval 1 to 42 is disordered; sequence MSNTTRSSRVTIGRIGTTPQITDPWSSGLEKQRPSRCGGPKS. 3 N-linked (GlcNAc...) asparagine glycosylation sites follow: asparagine 3, asparagine 109, and asparagine 130. Positions 139 to 164 are disordered; it reads VSSLHSSRRTNPPSSSSSSSSNVDVD. Low complexity predominate over residues 147-160; it reads RTNPPSSSSSSSSN. A glycan (N-linked (GlcNAc...) asparagine) is linked at asparagine 205. In terms of domain architecture, Peptidase S8 spans 383–705; it reads QWYLNGGAKD…YGLMDAGAMV (323 aa). Catalysis depends on aspartate 417, which acts as the Charge relay system. Residues 424–456 form a disordered region; the sequence is HPDLAQNYDPEASFDINGNDSDPTPQDNGDNKH. The span at 439 to 451 shows a compositional bias: polar residues; the sequence is INGNDSDPTPQDN. N-linked (GlcNAc...) asparagine glycosylation is present at asparagine 442. The active-site Charge relay system is histidine 456. Intrachain disulfides connect cysteine 473/cysteine 629 and cysteine 565/cysteine 595. Asparagine 480 carries an N-linked (GlcNAc...) asparagine glycan. The active-site Charge relay system is serine 637. The 139-residue stretch at 714–852 folds into the P/Homo B domain; sequence VPPQHICKSR…QLIFYGTSTQ (139 aa). A disulfide bridge connects residues cysteine 720 and cysteine 748. N-linked (GlcNAc...) asparagine glycosylation is present at asparagine 927. 10 FU repeats span residues 961–1006, 1009–1056, 1060–1104, 1107–1152, 1156–1204, 1208–1253, 1256–1299, 1301–1346, 1348–1393, and 1396–1443; these read KKIL…RSFP, VGIC…GYFE, NRTC…DTYE, DNKC…GFYA, RLEC…SEFY, EGQC…GFFV, GSLC…GYYS, RGIC…GFYK, DFGC…QYYD, and SATC…QTLA. Residue asparagine 1060 is glycosylated (N-linked (GlcNAc...) asparagine). Asparagine 1181 carries N-linked (GlcNAc...) asparagine glycosylation. N-linked (GlcNAc...) asparagine glycans are attached at residues asparagine 1274 and asparagine 1277. N-linked (GlcNAc...) asparagine glycosylation occurs at asparagine 1439. Residues 1512-1532 traverse the membrane as a helical segment; sequence AIAVAICLLIITIFSIIFAVL. The Cytoplasmic segment spans residues 1533 to 1679; the sequence is QRNSNHVSRN…STTSRTNIRS (147 aa). A disordered region spans residues 1660 to 1679; sequence TNAERKNHPSSTTSRTNIRS. Polar residues predominate over residues 1668 to 1679; that stretch reads PSSTTSRTNIRS.

The protein belongs to the peptidase S8 family. Furin subfamily. It depends on Ca(2+) as a cofactor. As to expression, transient expression in a subset of central nervous system neurons during embryonic stages 12-13. Expression in developing tracheal tree from stage 13 to end of embryonic development.

It localises to the membrane. The catalysed reaction is Release of mature proteins from their proproteins by cleavage of -Arg-Xaa-Yaa-Arg-|-Zaa- bonds, where Xaa can be any amino acid and Yaa is Arg or Lys. Releases albumin, complement component C3 and von Willebrand factor from their respective precursors.. In terms of biological role, furin is likely to represent the ubiquitous endoprotease activity within constitutive secretory pathways and capable of cleavage at the RX(K/R)R consensus motif. This chain is Furin-like protease 2 (Fur2), found in Drosophila melanogaster (Fruit fly).